The sequence spans 561 residues: DNA ligase B (561 aa).

The active-site N6-AMP-lysine intermediate is K125.

The protein belongs to the NAD-dependent DNA ligase family. LigB subfamily.

The enzyme catalyses NAD(+) + (deoxyribonucleotide)n-3'-hydroxyl + 5'-phospho-(deoxyribonucleotide)m = (deoxyribonucleotide)n+m + AMP + beta-nicotinamide D-nucleotide.. Its function is as follows. Catalyzes the formation of phosphodiester linkages between 5'-phosphoryl and 3'-hydroxyl groups in double-stranded DNA using NAD as a coenzyme and as the energy source for the reaction. This is DNA ligase B from Salmonella choleraesuis (strain SC-B67).